Reading from the N-terminus, the 2554-residue chain is Protein sevenless (2554 aa).

Over residues 1 to 10 (MTMFWQQNVD) the composition is skewed to polar residues. The disordered stretch occupies residues 1–25 (MTMFWQQNVDHQSDEQDKQAKGAAP). Residues 1–2123 (MTMFWQQNVD…AEPFVSPEKR (2123 aa)) lie on the Extracellular side of the membrane. Over residues 11 to 20 (HQSDEQDKQA) the composition is skewed to basic and acidic residues. Asparagine 30 is a glycosylation site (N-linked (GlcNAc...) asparagine). Over residues 51 to 70 (NQQAPGTSSSSSNSQNASPS) the composition is skewed to low complexity. The segment at 51–75 (NQQAPGTSSSSSNSQNASPSKIVVR) is disordered. Residue asparagine 129 is glycosylated (N-linked (GlcNAc...) asparagine). The interval 181–208 (SRPQSTMAHHPDDRDRDRDPSEEQHGVD) is disordered. The span at 189–208 (HHPDDRDRDRDPSEEQHGVD) shows a compositional bias: basic and acidic residues. Residues 440 to 533 (APVIEHLMGL…GFVQTHSARN (94 aa)) enclose the Fibronectin type-III 1 domain. N-linked (GlcNAc...) asparagine glycosylation is found at asparagine 481, asparagine 505, asparagine 617, and asparagine 647. One can recognise a Fibronectin type-III 2 domain in the interval 824-924 (AGGKPHSLKA…EPLAARTWPL (101 aa)). A glycan (N-linked (GlcNAc...) asparagine) is linked at asparagine 966. The LDL-receptor class B repeat unit spans residues 1010–1053 (GRVYWTDLARNCVVRMDPWSGSRELLPVFEANFLALDPRQGHLY). Fibronectin type-III domains follow at residues 1202 to 1290 (LPDS…TPPV) and 1294 to 1397 (QPRR…VAPE). Residues asparagine 1228, asparagine 1313, asparagine 1353, asparagine 1550, asparagine 1557, asparagine 1639, asparagine 1725, asparagine 1756, asparagine 1804, asparagine 1889, asparagine 1947, and asparagine 2073 are each glycosylated (N-linked (GlcNAc...) asparagine). Fibronectin type-III domains lie at 1801-1901 (PPRN…SFAE), 1902-1988 (LPEL…VYET), and 1995-2117 (QPGK…AEPF). Residues 2124–2147 (GSLVLAIIAPAAIVSSCVLALVLV) form a helical membrane-spanning segment. Topologically, residues 2148 to 2554 (RKVQKRRLRA…LYANEGVSRL (407 aa)) are cytoplasmic. One can recognise a Protein kinase domain in the interval 2209-2485 (LKLLRFLGSG…RCYNTLHAIS (277 aa)). Residues 2215 to 2223 (LGSGAFGEV) and lysine 2242 each bind ATP. The Proton acceptor role is filled by aspartate 2343. Tyrosine 2380 is modified (phosphotyrosine; by autocatalysis). The segment covering 2515–2527 (GQPLEEHREHNER) has biased composition (basic and acidic residues). Positions 2515-2534 (GQPLEEHREHNERPEDENLT) are disordered.

The protein belongs to the protein kinase superfamily. Tyr protein kinase family. Insulin receptor subfamily. As to quaternary structure, may form a complex with drk and Sos. Binds the phosphotyrosine interaction domain (PID) of Dab.

The protein localises to the cell membrane. It catalyses the reaction L-tyrosyl-[protein] + ATP = O-phospho-L-tyrosyl-[protein] + ADP + H(+). Functionally, receptor for an extracellular signal required to instruct a cell to differentiate into an R7 photoreceptor. The ligand for sev is the boss (bride of sevenless) protein on the surface of the neighboring R8 cell. The polypeptide is Protein sevenless (sev) (Drosophila melanogaster (Fruit fly)).